The following is a 697-amino-acid chain: Elongation factor G 2 (697 aa).

The tr-type G domain occupies 6–281; it reads TNYRNFGIFA…AVVDFLPNPT (276 aa). GTP-binding positions include 15–22, 79–83, and 133–136; these read AHVDAGKT, DTPGH, and NKLD.

Belongs to the TRAFAC class translation factor GTPase superfamily. Classic translation factor GTPase family. EF-G/EF-2 subfamily.

Its subcellular location is the cytoplasm. Functionally, catalyzes the GTP-dependent ribosomal translocation step during translation elongation. During this step, the ribosome changes from the pre-translocational (PRE) to the post-translocational (POST) state as the newly formed A-site-bound peptidyl-tRNA and P-site-bound deacylated tRNA move to the P and E sites, respectively. Catalyzes the coordinated movement of the two tRNA molecules, the mRNA and conformational changes in the ribosome. The protein is Elongation factor G 2 of Trichodesmium erythraeum (strain IMS101).